The sequence spans 89 residues: Small ribosomal subunit protein uS15 (89 aa).

The protein belongs to the universal ribosomal protein uS15 family. As to quaternary structure, part of the 30S ribosomal subunit. Forms a bridge to the 50S subunit in the 70S ribosome, contacting the 23S rRNA.

Functionally, one of the primary rRNA binding proteins, it binds directly to 16S rRNA where it helps nucleate assembly of the platform of the 30S subunit by binding and bridging several RNA helices of the 16S rRNA. In terms of biological role, forms an intersubunit bridge (bridge B4) with the 23S rRNA of the 50S subunit in the ribosome. The sequence is that of Small ribosomal subunit protein uS15 from Shewanella sp. (strain ANA-3).